A 446-amino-acid chain; its full sequence is NADH-quinone oxidoreductase subunit D (446 aa).

This sequence belongs to the complex I 49 kDa subunit family. In terms of assembly, NDH-1 is composed of 14 different subunits. Subunits NuoB, C, D, E, F, and G constitute the peripheral sector of the complex.

The protein resides in the cell membrane. It catalyses the reaction a quinone + NADH + 5 H(+)(in) = a quinol + NAD(+) + 4 H(+)(out). NDH-1 shuttles electrons from NADH, via FMN and iron-sulfur (Fe-S) centers, to quinones in the respiratory chain. The immediate electron acceptor for the enzyme in this species is believed to be a menaquinone. Couples the redox reaction to proton translocation (for every two electrons transferred, four hydrogen ions are translocated across the cytoplasmic membrane), and thus conserves the redox energy in a proton gradient. This Mycobacterium sp. (strain JLS) protein is NADH-quinone oxidoreductase subunit D.